The chain runs to 275 residues: C-type lectin domain family 12 member B (275 aa).

At 1 to 41 (MSDEVTYATLMLQDSARVRGNQDGNNLRKEGHPAQSSLWRG) the chain is on the cytoplasmic side. Residues 5–10 (VTYATL) carry the ITIM motif motif. Tyr7 carries the phosphotyrosine modification. Residues 42-64 (AALSLMTLCLVLVTGLVTLATMF) form a helical; Signal-anchor for type II membrane protein membrane-spanning segment. Residues 65–275 (LQVSNDINSD…ASLVKTEDLD (211 aa)) lie on the Extracellular side of the membrane. Asn91, Asn175, and Asn236 each carry an N-linked (GlcNAc...) asparagine glycan. Positions 149-263 (YGNSCYYFSI…CSAEIPWICE (115 aa)) constitute a C-type lectin domain. Intrachain disulfides connect Cys171-Cys262 and Cys241-Cys254.

As to quaternary structure, homodimer. Interacts (via ITIM motif) with PTPN6. Interacts (via ITIM motif) with PTPN11; this interaction triggers dephosphorylation and activation of PTPN11.

It is found in the cell membrane. Inhibitory receptor postulated to negatively regulate immune and non-immune functions. Upon phosphorylation, recruits SH2 domain-containing PTPN6 and PTPN11 phosphatases to its ITIM motif and antagonizes activation signals. Although it inhibits KLRK1/NKG2D-mediated signaling, it does not bind known ligands of KLRK1/NKG2D and therefore is not its inhibitory counterpart. May limit activation of myeloid cell subsets in response to infection or tissue inflammation. May protect target cells against natural killer cell-mediated lysis. May negatively regulate cell cycle and differentiation of melanocytes via inactivation of STAT3. This is C-type lectin domain family 12 member B (Clec12b) from Mus musculus (Mouse).